A 242-amino-acid chain; its full sequence is Coat protein (242 aa).

A compositionally biased stretch (pro residues) spans 1–16 (MGDQPRPPVPPAPGSN). Disordered regions lie at residues 1-41 (MGDQ…VANQ) and 219-242 (SNST…GPDA). Positions 219–232 (SNSTLLTKGASRST) are enriched in polar residues.

Belongs to the potexvirus capsid protein family.

Its subcellular location is the virion. Required for genome encapsidation. Forms ribonucleoprotein complexes along with TGB1 helicase and viral RNA. This chain is Coat protein, found in Strawberry mild yellow edge-associated virus (SMYEaV).